The chain runs to 180 residues: MAEFDLCALFSSLKVGDVSSSDELKKHIQSASKERTPLTEPGEGQSMDIDEEGGRQDPGILYLYVDCPTMMRCFYGGSLPYNSRHGALITNLPPYQKDVSLGEVCRGLRQASGFFGYEDVIRSAYFAALSVPGYFVKLDGQMELTSTKGKSLTFDLYASNQLRLEPGALVRHGECKFGME.

The span at 26 to 37 (KHIQSASKERTP) shows a compositional bias: basic and acidic residues. Positions 26–54 (KHIQSASKERTPLTEPGEGQSMDIDEEGG) are disordered.

Functionally, hydrolyzes cytokinin glucosides thus liberating free cytokinins. Contributes to the root inducing activity. This chain is Cytokinin-beta-glucosidase (rolC), found in Rhizobium rhizogenes (Agrobacterium rhizogenes).